We begin with the raw amino-acid sequence, 544 residues long: Chaperonin GroEL (544 aa).

ATP contacts are provided by residues 30–33, Lys51, 87–91, Gly415, 479–481, and Asp495; these read TLGP, DGTTT, and NAA.

This sequence belongs to the chaperonin (HSP60) family. As to quaternary structure, forms a cylinder of 14 subunits composed of two heptameric rings stacked back-to-back. Interacts with the co-chaperonin GroES.

The protein localises to the cytoplasm. It carries out the reaction ATP + H2O + a folded polypeptide = ADP + phosphate + an unfolded polypeptide.. Together with its co-chaperonin GroES, plays an essential role in assisting protein folding. The GroEL-GroES system forms a nano-cage that allows encapsulation of the non-native substrate proteins and provides a physical environment optimized to promote and accelerate protein folding. The chain is Chaperonin GroEL from Francisella tularensis subsp. tularensis (strain WY96-3418).